The primary structure comprises 994 residues: Phosphoenolpyruvate carboxylase (994 aa).

Positions 1–66 (MKSSGSARAT…QGRTREDKDR (66 aa)) are disordered. Composition is skewed to low complexity over residues 14 to 25 (AVSSSSAPAHAE) and 41 to 54 (AAAR…AASA). Active-site residues include histidine 204 and lysine 646.

This sequence belongs to the PEPCase type 1 family. Mg(2+) is required as a cofactor.

The catalysed reaction is oxaloacetate + phosphate = phosphoenolpyruvate + hydrogencarbonate. Its function is as follows. Forms oxaloacetate, a four-carbon dicarboxylic acid source for the tricarboxylic acid cycle. The protein is Phosphoenolpyruvate carboxylase of Burkholderia pseudomallei (strain 668).